Here is a 340-residue protein sequence, read N- to C-terminus: Predicted GPI-anchored protein 46 (340 aa).

Positions 1-29 (MKILLIYSMTPKLVIWFTLFVLCLQMGDT) are cleaved as a signal peptide. The span at 99–115 (SETTTTTTQESETSIAT) shows a compositional bias: low complexity. Disordered stretches follow at residues 99–154 (SETT…SLSS) and 181–212 (MSSS…IKNY). N-linked (GlcNAc...) asparagine glycosylation is present at Asn127. The span at 182–191 (SSSSSSSSGS) shows a compositional bias: low complexity. A compositionally biased stretch (basic and acidic residues) spans 192-202 (LRDKSKLKQEN). Residue Asn270 is glycosylated (N-linked (GlcNAc...) asparagine). Residue Asn314 is the site of GPI-anchor amidated asparagine attachment. The propeptide at 315–340 (SAPLLWIKISKPTVCLVIALTFLLLG) is removed in mature form.

The protein localises to the cell membrane. Its subcellular location is the secreted. In Candida albicans (strain SC5314 / ATCC MYA-2876) (Yeast), this protein is Predicted GPI-anchored protein 46 (PGA46).